Consider the following 323-residue polypeptide: Methenyltetrahydromethanopterin cyclohydrolase (323 aa).

It belongs to the MCH family.

The protein localises to the cytoplasm. It catalyses the reaction 5,10-methenyl-5,6,7,8-tetrahydromethanopterin + H2O = N(5)-formyl-5,6,7,8-tetrahydromethanopterin + H(+). It functions in the pathway one-carbon metabolism; methanogenesis from CO(2); 5,10-methenyl-5,6,7,8-tetrahydromethanopterin from CO(2): step 3/3. Catalyzes the reversible interconversion of 5-formyl-H(4)MPT to methenyl-H(4)MPT(+). In Methanococcus maripaludis (strain C7 / ATCC BAA-1331), this protein is Methenyltetrahydromethanopterin cyclohydrolase.